The sequence spans 247 residues: Probable transcriptional regulatory protein Hhal_2210 (247 aa).

It belongs to the TACO1 family.

It localises to the cytoplasm. The sequence is that of Probable transcriptional regulatory protein Hhal_2210 from Halorhodospira halophila (strain DSM 244 / SL1) (Ectothiorhodospira halophila (strain DSM 244 / SL1)).